The sequence spans 406 residues: Acetylornithine/succinyldiaminopimelate aminotransferase (406 aa).

Pyridoxal 5'-phosphate-binding positions include 108 to 109 (GT) and phenylalanine 141. A N(2)-acetyl-L-ornithine-binding site is contributed by arginine 144. Position 226 to 229 (226 to 229 (DEVQ)) interacts with pyridoxal 5'-phosphate. Lysine 255 carries the N6-(pyridoxal phosphate)lysine modification. Serine 283 provides a ligand contact to N(2)-acetyl-L-ornithine. Position 284 (threonine 284) interacts with pyridoxal 5'-phosphate.

Belongs to the class-III pyridoxal-phosphate-dependent aminotransferase family. ArgD subfamily. As to quaternary structure, homodimer. The cofactor is pyridoxal 5'-phosphate.

The protein resides in the cytoplasm. The catalysed reaction is N(2)-acetyl-L-ornithine + 2-oxoglutarate = N-acetyl-L-glutamate 5-semialdehyde + L-glutamate. It catalyses the reaction N-succinyl-(2S,6S)-2,6-diaminopimelate + 2-oxoglutarate = (S)-2-succinylamino-6-oxoheptanedioate + L-glutamate. Its pathway is amino-acid biosynthesis; L-arginine biosynthesis; N(2)-acetyl-L-ornithine from L-glutamate: step 4/4. It participates in amino-acid biosynthesis; L-lysine biosynthesis via DAP pathway; LL-2,6-diaminopimelate from (S)-tetrahydrodipicolinate (succinylase route): step 2/3. Involved in both the arginine and lysine biosynthetic pathways. The sequence is that of Acetylornithine/succinyldiaminopimelate aminotransferase from Escherichia coli (strain K12).